The chain runs to 210 residues: Protein GrpE (210 aa).

The interval 191–210 is disordered; sequence KGGPKPAEAETNSVFDEKDA.

The protein belongs to the GrpE family. Homodimer.

The protein localises to the cytoplasm. Its function is as follows. Participates actively in the response to hyperosmotic and heat shock by preventing the aggregation of stress-denatured proteins, in association with DnaK and GrpE. It is the nucleotide exchange factor for DnaK and may function as a thermosensor. Unfolded proteins bind initially to DnaJ; upon interaction with the DnaJ-bound protein, DnaK hydrolyzes its bound ATP, resulting in the formation of a stable complex. GrpE releases ADP from DnaK; ATP binding to DnaK triggers the release of the substrate protein, thus completing the reaction cycle. Several rounds of ATP-dependent interactions between DnaJ, DnaK and GrpE are required for fully efficient folding. The chain is Protein GrpE from Rhizobium etli (strain CIAT 652).